We begin with the raw amino-acid sequence, 1829 residues long: Iron-regulated protein FrpC (1829 aa).

Hemolysin-type calcium-binding repeat units follow at residues Phe869–Leu886, Ile887–Tyr904, Asn1015–Leu1032, Asn1033–Leu1050, Asn1051–Leu1068, Asn1069–Leu1086, Ile1087–Tyr1104, Asn1215–Leu1232, Asn1233–Leu1250, Asp1251–Leu1268, Asn1269–Leu1286, Ile1287–Tyr1304, Asn1415–Leu1432, Asn1433–Leu1450, Asp1451–Leu1468, Asn1469–Leu1486, Ile1487–Tyr1504, Asn1615–Leu1632, Asn1633–Leu1650, Asn1651–Leu1668, Asn1669–Leu1686, and Ile1687–Tyr1704.

It belongs to the RTX prokaryotic toxin (TC 1.C.11) family.

Its subcellular location is the cell outer membrane. It localises to the secreted. In terms of biological role, may participate in the pathogenesis of meningococcal disease. This Neisseria meningitidis serogroup C protein is Iron-regulated protein FrpC (frpC).